The chain runs to 464 residues: tRNA modification GTPase MnmE (464 aa).

(6S)-5-formyl-5,6,7,8-tetrahydrofolate is bound by residues R25, E87, and K130. In terms of domain architecture, TrmE-type G spans 226-386 (GLSVVLAGQP…LRAELLRIAG (161 aa)). Residue N236 participates in K(+) binding. GTP contacts are provided by residues 236-241 (NVGKSS), 255-261 (TPIAGTT), and 280-283 (DTAG). S240 provides a ligand contact to Mg(2+). 3 residues coordinate K(+): T255, I257, and T260. T261 lines the Mg(2+) pocket. K464 is a (6S)-5-formyl-5,6,7,8-tetrahydrofolate binding site.

Belongs to the TRAFAC class TrmE-Era-EngA-EngB-Septin-like GTPase superfamily. TrmE GTPase family. As to quaternary structure, homodimer. Heterotetramer of two MnmE and two MnmG subunits. Requires K(+) as cofactor.

The protein resides in the cytoplasm. In terms of biological role, exhibits a very high intrinsic GTPase hydrolysis rate. Involved in the addition of a carboxymethylaminomethyl (cmnm) group at the wobble position (U34) of certain tRNAs, forming tRNA-cmnm(5)s(2)U34. The polypeptide is tRNA modification GTPase MnmE (Burkholderia ambifaria (strain MC40-6)).